The following is an 800-amino-acid chain: Nucleolar RNA helicase 2-B (800 aa).

The span at 1 to 14 (MPGKVYTDEMEGKS) shows a compositional bias: basic and acidic residues. The segment at 1 to 200 (MPGKVYTDEM…TDTSEITAAN (200 aa)) is disordered. A compositionally biased stretch (polar residues) spans 114–124 (ETNISLSSQGG). The Q motif motif lies at 221–249 (GDFSKFPISKDTIKNLQAKGVTYLFPIQS). The region spanning 252–431 (FHTVYSGKDV…KKYMRKQYEK (180 aa)) is the Helicase ATP-binding domain. 265–272 (ARTGTGKT) contributes to the ATP binding site. A DEAD box motif is present at residues 374-377 (DEVD). Residues 464–620 (DIVQVYSGSH…SSADAIKSLD (157 aa)) enclose the Helicase C-terminal domain. The tract at residues 750-800 (IQESERSFDGPRNRSFGGRGRRPFDRRNNSRNSSGGGGGRRGRSGGFRRGR) is disordered. Residues 752–761 (ESERSFDGPR) are compositionally biased toward basic and acidic residues. Residues 789–800 (RRGRSGGFRRGR) show a composition bias toward basic residues.

This sequence belongs to the DEAD box helicase family. DDX21/DDX50 subfamily. In terms of tissue distribution, widely expressed. Expressed at higher level in stomach. Expressed at lower level compared to ddx21-a.

It is found in the nucleus. The protein resides in the nucleolus. Its subcellular location is the nucleoplasm. The protein localises to the cytoplasm. It localises to the cytosol. It is found in the mitochondrion. It carries out the reaction ATP + H2O = ADP + phosphate + H(+). In terms of biological role, RNA helicase that acts as a sensor of the transcriptional status of both RNA polymerase (Pol) I and II: promotes ribosomal RNA (rRNA) processing and transcription from polymerase II (Pol II). Binds various RNAs, such as rRNAs, snoRNAs, 7SK and, at lower extent, mRNAs. In the nucleolus, localizes to rDNA locus, where it directly binds rRNAs and snoRNAs, and promotes rRNA transcription, processing and modification. Required for rRNA 2'-O-methylation, possibly by promoting the recruitment of late-acting snoRNAs SNORD56 and SNORD58 with pre-ribosomal complexes. In the nucleoplasm, binds 7SK RNA and is recruited to the promoters of Pol II-transcribed genes: acts by facilitating the release of P-TEFb from inhibitory 7SK snRNP in a manner that is dependent on its helicase activity, thereby promoting transcription of its target genes. Required to prevent R-loop-associated DNA damage and transcription-associated genomic instability. This Xenopus laevis (African clawed frog) protein is Nucleolar RNA helicase 2-B (ddx21-b).